Reading from the N-terminus, the 392-residue chain is Major outer membrane protein P.IA (392 aa).

The N-terminal stretch at 1 to 19 is a signal peptide; the sequence is MRKKLTALVLSALPLAAVA.

The protein belongs to the Gram-negative porin family. Homotrimer.

The protein resides in the cell outer membrane. In terms of biological role, serves as a slightly cation selective porin. Major antigen on the gonococcal cell surface and it may have pathogenic properties in addition to its porin activity. The polypeptide is Major outer membrane protein P.IA (porA) (Neisseria meningitidis serogroup B / serotype 15 (strain H44/76)).